The primary structure comprises 358 residues: Bi-functional coumaroyl CoA and feruloyl CoA ortho-hydroxylase F6H2-1-1 (358 aa).

In terms of domain architecture, Fe2OG dioxygenase spans 207–308; sequence GSRRININYY…RISVPVFVNP (102 aa). Residue Y216 coordinates 2-oxoglutarate. H231, D233, and H289 together coordinate Fe cation. R299 and S301 together coordinate 2-oxoglutarate.

The protein belongs to the iron/ascorbate-dependent oxidoreductase family. L-ascorbate serves as cofactor. Requires Fe(2+) as cofactor. In terms of tissue distribution, mostly expressed in underground stems and stems, and, at low levels, in tubers, leaves and petioles.

The enzyme catalyses (E)-4-coumaroyl-CoA + 2-oxoglutarate + O2 = (E)-2,4-dihydroxycinnamoyl-CoA + succinate + CO2. The catalysed reaction is (E)-feruloyl-CoA + 2-oxoglutarate + O2 = (E)-6-hydroxyferuloyl-CoA + succinate + CO2. It functions in the pathway phenylpropanoid metabolism. Functionally, 2-oxoglutarate (OG)- and Fe(II)-dependent dioxygenase (2OGD) involved in scopoletin and umbelliferone biosynthesis. Converts feruloyl CoA into 6'-hydroxyferuloyl CoA, and p-coumaroyl CoA into 2,4-dihydroxycinnamoyl-CoA, but has no activity with caffeoyl-CoA. In Ipomoea batatas (Sweet potato), this protein is Bi-functional coumaroyl CoA and feruloyl CoA ortho-hydroxylase F6H2-1-1.